A 441-amino-acid polypeptide reads, in one-letter code: Ribulose bisphosphate carboxylase large chain (441 aa).

N6,N6,N6-trimethyllysine is present on lysine 5. A substrate-binding site is contributed by threonine 164. Catalysis depends on lysine 166, which acts as the Proton acceptor. Residue lysine 168 coordinates substrate. Positions 192, 194, and 195 each coordinate Mg(2+). Lysine 192 is subject to N6-carboxylysine. Histidine 285 functions as the Proton acceptor in the catalytic mechanism. 3 residues coordinate substrate: arginine 286, histidine 318, and serine 370.

The protein belongs to the RuBisCO large chain family. Type I subfamily. Heterohexadecamer of 8 large chains and 8 small chains; disulfide-linked. The disulfide link is formed within the large subunit homodimers. Mg(2+) serves as cofactor. The disulfide bond which can form in the large chain dimeric partners within the hexadecamer appears to be associated with oxidative stress and protein turnover.

The protein resides in the plastid. It is found in the chloroplast. The enzyme catalyses 2 (2R)-3-phosphoglycerate + 2 H(+) = D-ribulose 1,5-bisphosphate + CO2 + H2O. It catalyses the reaction D-ribulose 1,5-bisphosphate + O2 = 2-phosphoglycolate + (2R)-3-phosphoglycerate + 2 H(+). Its function is as follows. RuBisCO catalyzes two reactions: the carboxylation of D-ribulose 1,5-bisphosphate, the primary event in carbon dioxide fixation, as well as the oxidative fragmentation of the pentose substrate in the photorespiration process. Both reactions occur simultaneously and in competition at the same active site. This is Ribulose bisphosphate carboxylase large chain from Hemionitis engywookii (Fendler's false cloak fern).